The sequence spans 253 residues: UPF0280 protein Mbar_A3697 (253 aa).

The protein belongs to the UPF0280 family.

This is UPF0280 protein Mbar_A3697 from Methanosarcina barkeri (strain Fusaro / DSM 804).